The primary structure comprises 759 residues: 5-methyltetrahydropteroyltriglutamate--homocysteine methyltransferase (759 aa).

5-methyltetrahydropteroyltri-L-glutamate-binding positions include 17–20 and lysine 116; that span reads RELK. Residues 430–432 and glutamate 483 contribute to the L-homocysteine site; that span reads IGS. L-methionine contacts are provided by residues 430–432 and glutamate 483; that span reads IGS. 5-methyltetrahydropteroyltri-L-glutamate-binding positions include 514–515 and tryptophan 560; that span reads RC. An L-homocysteine-binding site is contributed by aspartate 598. Aspartate 598 lines the L-methionine pocket. Residue glutamate 604 participates in 5-methyltetrahydropteroyltri-L-glutamate binding. 3 residues coordinate Zn(2+): histidine 641, cysteine 643, and glutamate 665. Histidine 694 functions as the Proton donor in the catalytic mechanism. Position 726 (cysteine 726) interacts with Zn(2+).

The protein belongs to the vitamin-B12 independent methionine synthase family. It depends on Zn(2+) as a cofactor.

The catalysed reaction is 5-methyltetrahydropteroyltri-L-glutamate + L-homocysteine = tetrahydropteroyltri-L-glutamate + L-methionine. Its pathway is amino-acid biosynthesis; L-methionine biosynthesis via de novo pathway; L-methionine from L-homocysteine (MetE route): step 1/1. Catalyzes the transfer of a methyl group from 5-methyltetrahydrofolate to homocysteine resulting in methionine formation. The protein is 5-methyltetrahydropteroyltriglutamate--homocysteine methyltransferase of Lactococcus lactis subsp. lactis (strain IL1403) (Streptococcus lactis).